Here is a 331-residue protein sequence, read N- to C-terminus: MATPHHSRRGSMAYYPRVRAKSVDPKIRSWPEIKGEVKVQGFAGFKVGMTHVEMIDYRKKSVTAGQPILVPVTVVEVPPLDVVGYRLYDEDAEGNLVVVFEAWAKDLDKEIFRKIPEIKKVAERDPPESYEDVRIIVATRNKDVPGIPSKKPEIFELRIGGGNSVKERLEYAKNHLGKQITFTDFSKPGKFVDVVSITKGKGFTGHVKRFGVKLLPRKNRKHRRMIGTLGPWHPDWVRNTVPQAGQMGFQQRTISNVRVIKYGNKEEVDSINVRGGFLHYGFVKNDYVLLFGSIPGASKRLIKMRDPARQKVPDIEEVKLEYISLESKQGD.

This sequence belongs to the universal ribosomal protein uL3 family. In terms of assembly, part of the 50S ribosomal subunit. Forms a cluster with proteins L14 and L24e.

One of the primary rRNA binding proteins, it binds directly near the 3'-end of the 23S rRNA, where it nucleates assembly of the 50S subunit. This chain is Large ribosomal subunit protein uL3, found in Thermoplasma acidophilum (strain ATCC 25905 / DSM 1728 / JCM 9062 / NBRC 15155 / AMRC-C165).